A 407-amino-acid polypeptide reads, in one-letter code: Substance-P receptor (407 aa).

Positions 1-20 (MDNVLPVDSDLFPNTSTNTS) are disordered. At 1–31 (MDNVLPVDSDLFPNTSTNTSESNQFVQPTWQ) the chain is on the extracellular side. Residues Asn14 and Asn18 are each glycosylated (N-linked (GlcNAc...) asparagine). Residues 32 to 54 (IVLWAAAYTVIVVTSVVGNVVVI) traverse the membrane as a helical segment. The Cytoplasmic segment spans residues 55–64 (WIILAHKRMR). Residues 65 to 86 (TVTNYFLVNLAFAEACMAAFNT) traverse the membrane as a helical segment. Residues 87 to 106 (VVNFTYAVHNVWYYGLFYCK) are Extracellular-facing. Residues Cys105 and Cys180 are joined by a disulfide bond. Residues 107-128 (FHNFFPIAALFASIYSMTAVAF) traverse the membrane as a helical segment. The Cytoplasmic portion of the chain corresponds to 129-148 (DRYMAIIHPLQPRLSATATK). The helical transmembrane segment at 149–169 (VVIFVIWVLALLLAFPQGYYS) threads the bilayer. Residues 170–194 (TTETMPSRVVCMIEWPEHPNRTYEK) are Extracellular-facing. The chain crosses the membrane as a helical span at residues 195–219 (AYHICVTVLIYFLPLLVIGYAYTVV). Over 220-248 (GITLWASEIPGDSSDRYHEQVSAKRKVVK) the chain is Cytoplasmic. Residues 249–270 (MMIVVVCTFAICWLPFHIFFLL) traverse the membrane as a helical segment. Residues 271 to 283 (PYINPDLYLKKFI) lie on the Extracellular side of the membrane. Residues 284–308 (QQVYLASMWLAMSSTMYNPIIYCCL) traverse the membrane as a helical segment. Residues 309-407 (NDRFRLGFKH…SSSFYSNMLA (99 aa)) lie on the Cytoplasmic side of the membrane. Cys322 is lipidated: S-palmitoyl cysteine. The tract at residues 362–407 (VGAHEDEPEEGPKATPSSLDLTSNGSSRSNSKTMTESSSFYSNMLA) is disordered. The segment covering 376 to 407 (TPSSLDLTSNGSSRSNSKTMTESSSFYSNMLA) has biased composition (polar residues).

Belongs to the G-protein coupled receptor 1 family. Interacts with ARRB1.

Its subcellular location is the cell membrane. In terms of biological role, this is a receptor for the tachykinin neuropeptide substance P. It is probably associated with G proteins that activate a phosphatidylinositol-calcium second messenger system. The rank order of affinity of this receptor to tachykinins is: substance P &gt; substance K &gt; neuromedin K. The protein is Substance-P receptor (Tacr1) of Mus musculus (Mouse).